Reading from the N-terminus, the 283-residue chain is Thymidylate synthase (283 aa).

A dUMP-binding site is contributed by Arg-22. Catalysis depends on Cys-160, which acts as the Nucleophile. DUMP contacts are provided by residues 180–183 (RSCD), Asn-191, and 221–223 (HIY). Asp-183 contacts (6R)-5,10-methylene-5,6,7,8-tetrahydrofolate. Ser-282 serves as a coordination point for (6R)-5,10-methylene-5,6,7,8-tetrahydrofolate.

The protein belongs to the thymidylate synthase family. Bacterial-type ThyA subfamily. Homodimer.

Its subcellular location is the cytoplasm. The enzyme catalyses dUMP + (6R)-5,10-methylene-5,6,7,8-tetrahydrofolate = 7,8-dihydrofolate + dTMP. It participates in pyrimidine metabolism; dTTP biosynthesis. Its function is as follows. Catalyzes the reductive methylation of 2'-deoxyuridine-5'-monophosphate (dUMP) to 2'-deoxythymidine-5'-monophosphate (dTMP) while utilizing 5,10-methylenetetrahydrofolate (mTHF) as the methyl donor and reductant in the reaction, yielding dihydrofolate (DHF) as a by-product. This enzymatic reaction provides an intracellular de novo source of dTMP, an essential precursor for DNA biosynthesis. This Aliivibrio fischeri (strain ATCC 700601 / ES114) (Vibrio fischeri) protein is Thymidylate synthase.